A 122-amino-acid polypeptide reads, in one-letter code: UPF0102 protein XAC0764 (122 aa).

It belongs to the UPF0102 family.

The protein is UPF0102 protein XAC0764 of Xanthomonas axonopodis pv. citri (strain 306).